The chain runs to 1275 residues: Probable Rho-type GTPase-activating protein 2 (1275 aa).

Disordered regions lie at residues 118–146 (KYES…SPYE), 213–238 (NTKR…LKDS), 280–306 (SSFR…KDNN), and 335–365 (SSPR…SKSG). The segment covering 122–143 (TDSFPSSQPSRANSPQSDSYSS) has biased composition (polar residues). Composition is skewed to polar residues over residues 290-299 (TPFNSDSNIS) and 353-364 (PKHSTNNLSSKS). Phosphoserine is present on Ser388. Disordered regions lie at residues 390 to 466 (IIEN…RSSF) and 539 to 561 (FSKS…SNSK). 2 stretches are compositionally biased toward polar residues: residues 450–466 (SLSL…RSSF) and 552–561 (QVEKSTSNSK). The region spanning 719-836 (HAQKEGVLLK…WLRAILRQVP (118 aa)) is the PH domain. Positions 957-971 (ADTRRNQDAPEKHVP) are enriched in basic and acidic residues. Disordered stretches follow at residues 957–988 (ADTR…TDQS) and 1254–1275 (NGAQ…NEFF). Residues 1065-1275 (LPLNEAVNIS…DDNGEDNEFF (211 aa)) enclose the Rho-GAP domain. Residues 1260–1275 (SDSDVSDDNGEDNEFF) show a composition bias toward acidic residues.

The protein localises to the nucleus. In terms of biological role, GTPase-activating protein for Rho-type proteins. The chain is Probable Rho-type GTPase-activating protein 2 (rga2) from Schizosaccharomyces pombe (strain 972 / ATCC 24843) (Fission yeast).